The chain runs to 74 residues: Imcroporin (74 aa).

The signal sequence occupies residues 1 to 22 (MKFQYLLAVFLIVLVVTDHCQA). The residue at position 39 (K39) is a Lysine amide; partial. Positions 45–74 (QLEARFEPKQRNFRKRELDFEKLFANMPDY) are excised as a propeptide.

The protein belongs to the non-disulfide-bridged peptide (NDBP) superfamily. Short antimicrobial peptide (group 4) family. In terms of tissue distribution, expressed by the venom gland.

The protein localises to the secreted. It is found in the target cell membrane. Functionally, has potent antibacterial activity against Gram-positive bacteria M.luteus, B.thuringiensis, S.aureus and B.subtilis, but not Gram-negative bacteria. Shows a weak cytotoxicity effect against mammalian cell lines and relatively low hemolytic activity against human erythrocytes. This is Imcroporin from Isometrus maculatus (Lesser brown scorpion).